Here is a 616-residue protein sequence, read N- to C-terminus: Dihydroxy-acid dehydratase (616 aa).

Aspartate 81 is a binding site for Mg(2+). [2Fe-2S] cluster is bound at residue cysteine 122. The Mg(2+) site is built by aspartate 123 and lysine 124. The residue at position 124 (lysine 124) is an N6-carboxylysine. Cysteine 195 lines the [2Fe-2S] cluster pocket. Glutamate 491 is a Mg(2+) binding site. The active-site Proton acceptor is serine 517.

It belongs to the IlvD/Edd family. Homodimer. It depends on [2Fe-2S] cluster as a cofactor. The cofactor is Mg(2+).

It carries out the reaction (2R)-2,3-dihydroxy-3-methylbutanoate = 3-methyl-2-oxobutanoate + H2O. The catalysed reaction is (2R,3R)-2,3-dihydroxy-3-methylpentanoate = (S)-3-methyl-2-oxopentanoate + H2O. The protein operates within amino-acid biosynthesis; L-isoleucine biosynthesis; L-isoleucine from 2-oxobutanoate: step 3/4. It functions in the pathway amino-acid biosynthesis; L-valine biosynthesis; L-valine from pyruvate: step 3/4. Functions in the biosynthesis of branched-chain amino acids. Catalyzes the dehydration of (2R,3R)-2,3-dihydroxy-3-methylpentanoate (2,3-dihydroxy-3-methylvalerate) into 2-oxo-3-methylpentanoate (2-oxo-3-methylvalerate) and of (2R)-2,3-dihydroxy-3-methylbutanoate (2,3-dihydroxyisovalerate) into 2-oxo-3-methylbutanoate (2-oxoisovalerate), the penultimate precursor to L-isoleucine and L-valine, respectively. This Escherichia coli O81 (strain ED1a) protein is Dihydroxy-acid dehydratase.